The following is a 191-amino-acid chain: MSPSLHPLLDNGITKGDPNFPGGNLYCKCSSDKVVVKLASNVAHNHACGCSKCWKPAGSLFSIVGVVPRDAVSVTEHAEKLSIVDASAAIQRYACKGCGVHMFGRIEKDHPFKGLDFVHAELSDQKGWQEPQFAGFVSSIIEQGFHPKGMEEVRSKFHSLGLETYDALSPALMDLIATFTAQRAGVLSANL.

The CENP-V/GFA domain maps to 20–166; that stretch reads FPGGNLYCKC…FHSLGLETYD (147 aa). Residues C27, C29, C48, C50, C53, C95, and C98 each contribute to the Zn(2+) site.

The protein belongs to the Gfa family. Zn(2+) serves as cofactor.

The catalysed reaction is S-(hydroxymethyl)glutathione = glutathione + formaldehyde. It participates in one-carbon metabolism; formaldehyde degradation; formate from formaldehyde (glutathione route): step 1/3. In terms of biological role, catalyzes the condensation of formaldehyde and glutathione to S-hydroxymethylglutathione. This is Putative glutathione-dependent formaldehyde-activating enzyme from Aspergillus niger (strain ATCC MYA-4892 / CBS 513.88 / FGSC A1513).